The sequence spans 439 residues: MVDIIKTNATFKAGKGNKGTLSFEIPAKQISSGIDQAFNKQKDKINIPGFRKGHVSKELFLARFGEEALYEDALNAILPDIYDQAVNEADITVVGQPQIIPDDLKHGGPWKIHAEVTLAPTVELGDYKGVEVEKESDEVSDKELNAELERLQKGEAELVPAKEDQVSEKGDTVVIDFDGSVDGKQFDGGKAQNFSLSLGSGQFIPGFEDQLVGHKAGDDVDVKVTFPKNYQAKNLAGKEAVFAVTIHELKKLETPALDNEFAKDVDDSVSSLEELKAKTKEKLAKDKAEKNKDAFEDAAIQKVVDGAKINPEKLPEEMINDDVSRQMQTFFNNLAGQGVKPEMYFQITGTSQEQLKQQMTEGAPNRVKTNLVLEEIARVEKINPSNEEIDKEIKSLASEYNIKESEVEKSVSAGMLSHDLKVQQAVELIVNSAQAVEKK.

Positions 170–255 constitute a PPIase FKBP-type domain; that stretch reads GDTVVIDFDG…IHELKKLETP (86 aa).

The protein belongs to the FKBP-type PPIase family. Tig subfamily.

The protein localises to the cytoplasm. The catalysed reaction is [protein]-peptidylproline (omega=180) = [protein]-peptidylproline (omega=0). Involved in protein export. Acts as a chaperone by maintaining the newly synthesized protein in an open conformation. Functions as a peptidyl-prolyl cis-trans isomerase. In Oenococcus oeni (strain ATCC BAA-331 / PSU-1), this protein is Trigger factor.